Here is a 528-residue protein sequence, read N- to C-terminus: Protein spinster homolog 1 (528 aa).

Residues 1-38 form a disordered region; the sequence is MAGSDTAPFLSQADDPDDGPAPGHPGLPGPMGNPKSGE. An N-acetylalanine modification is found at Ala2. Transmembrane regions (helical) follow at residues 60–80, 98–118, 126–146, 160–180, 187–207, 218–238, 278–298, 323–343, 357–377, 381–401, 421–441, and 465–485; these read LIVVVLCYINLLNYMDRFTVA, GLIQTVFISSYMVLAPVFGYL, YLMCGGIAFWSLVTLGSSFIP, VGVGEASYSTIAPTLIADLFV, MLSIFYFAIPVGSGLGYIAGS, WALRVTPGLGVLAVLLLFLVV, LGFTAVAFVTGSLALWAPAFL, LIFGLITCLTGVLGVGLGVEI, LVCAAGLLGSSPFLFLSLACA, IVATYIFIFIGETLLSMNWAI, FQIVLSHLLGDAGSPYLIGLI, and MLCAFVGALGGAAFLGTAMFI. Ser518 bears the Phosphoserine mark.

It belongs to the major facilitator superfamily. Spinster (TC 2.A.1.49) family. In terms of assembly, interacts with BCL2 and BCL2L1.

It localises to the lysosome membrane. It catalyses the reaction a 1-acyl-sn-glycero-3-phosphocholine(out) + H(+)(out) = a 1-acyl-sn-glycero-3-phosphocholine(in) + H(+)(in). The enzyme catalyses 1-hexadecanoyl-sn-glycero-3-phosphocholine(out) + H(+)(out) = 1-hexadecanoyl-sn-glycero-3-phosphocholine(in) + H(+)(in). The catalysed reaction is 1-(9Z-octadecenoyl)-sn-glycero-3-phosphocholine(out) + H(+)(out) = 1-(9Z-octadecenoyl)-sn-glycero-3-phosphocholine(in) + H(+)(in). It carries out the reaction 1-(5Z,8Z,11Z,14Z-eicosatetraenoyl)-sn-glycero-3-phosphocholine(out) + H(+)(out) = 1-(5Z,8Z,11Z,14Z-eicosatetraenoyl)-sn-glycero-3-phosphocholine(in) + H(+)(in). It catalyses the reaction 1-(4Z,7Z,10Z,13Z,16Z,19Z-docosahexaenoyl)-sn-glycero-3-phosphocholine(out) + H(+)(out) = 1-(4Z,7Z,10Z,13Z,16Z,19Z-docosahexaenoyl)-sn-glycero-3-phosphocholine(in) + H(+)(in). The enzyme catalyses a 1-acyl-sn-glycero-3-phosphoethanolamine(out) + H(+)(out) = a 1-acyl-sn-glycero-3-phosphoethanolamine(in) + H(+)(in). The catalysed reaction is 1-(9Z-octadecenoyl)-sn-glycero-3-phosphoethanolamine(out) + H(+)(out) = 1-(9Z-octadecenoyl)-sn-glycero-3-phosphoethanolamine(in) + H(+)(in). It carries out the reaction 1-acyl-sn-glycero-3-phospho-(1'-sn-glycerol)(out) + H(+)(out) = 1-acyl-sn-glycero-3-phospho-(1'-sn-glycerol)(in) + H(+)(in). It catalyses the reaction 1-(9Z-octadecenoyl)-sn-glycero-3-phospho-(1'-sn-glycerol)(out) + H(+)(out) = 1-(9Z-octadecenoyl)-sn-glycero-3-phospho-(1'-sn-glycerol)(in) + H(+)(in). The enzyme catalyses a 1-O-(1Z-alkenyl)-sn-glycero-3-phosphocholine(out) + H(+)(out) = a 1-O-(1Z-alkenyl)-sn-glycero-3-phosphocholine(in) + H(+)(in). The catalysed reaction is 1-(1Z-hexadecenyl)-sn-glycero-3-phosphocholine(out) + H(+)(out) = 1-(1Z-hexadecenyl)-sn-glycero-3-phosphocholine(in) + H(+)(in). It carries out the reaction a 1-O-(1Z-alkenyl)-sn-glycero-3-phosphoethanolamine(out) + H(+)(out) = a 1-O-(1Z-alkenyl)-sn-glycero-3-phosphoethanolamine(in) + H(+)(in). It catalyses the reaction 1-O-(1Z-hexadecenyl)-sn-glycero-3-phosphoethanolamine(out) + H(+)(out) = 1-O-(1Z-hexadecenyl)-sn-glycero-3-phosphoethanolamine(in) + H(+)(in). Functionally, plays a critical role in the phospholipid salvage pathway from lysosomes to the cytosol. Mediates the rate-limiting, proton-dependent, lysosomal efflux of lysophospholipids, which can then be reacylated by acyltransferases in the endoplasmic reticulum to form phospholipids. Selective for zwitterionic headgroups such as lysophosphatidylcholine (LPC) and lysophosphatidylethanolamine (LPE), can also transport lysophosphatidylglycerol (LPG), but not other anionic lysophospholipids, sphingosine, nor sphingomyelin. Transports lysophospholipids with saturated, monounsaturated, and polyunsaturated fatty acids, such as 1-hexadecanoyl-sn-glycero-3-phosphocholine, 1-(9Z-octadecenoyl)-sn-glycero-3-phosphocholine and 1-(4Z,7Z,10Z,13Z,16Z,19Z-docosahexaenoyl)-sn-glycero-3-phosphocholine, respectively. Can also transport lysoplasmalogen (LPC with a fatty alcohol) such as 1-(1Z-hexadecenyl)-sn-glycero-3-phosphocholine. Essential player in lysosomal homeostasis. Crucial for cell survival under conditions of nutrient limitation. May be involved in necrotic or autophagic cell death. This Rattus norvegicus (Rat) protein is Protein spinster homolog 1 (Spns1).